Here is a 467-residue protein sequence, read N- to C-terminus: Glutamate--tRNA ligase (467 aa).

A 'HIGH' region motif is present at residues 9 to 19; that stretch reads PSPTGYLHIGG. The short motif at 237–241 is the 'KMSKS' region element; that stretch reads KLSKR. Lys-240 serves as a coordination point for ATP.

This sequence belongs to the class-I aminoacyl-tRNA synthetase family. Glutamate--tRNA ligase type 1 subfamily. In terms of assembly, monomer.

It localises to the cytoplasm. The catalysed reaction is tRNA(Glu) + L-glutamate + ATP = L-glutamyl-tRNA(Glu) + AMP + diphosphate. In terms of biological role, catalyzes the attachment of glutamate to tRNA(Glu) in a two-step reaction: glutamate is first activated by ATP to form Glu-AMP and then transferred to the acceptor end of tRNA(Glu). The polypeptide is Glutamate--tRNA ligase (Xylella fastidiosa (strain M23)).